We begin with the raw amino-acid sequence, 432 residues long: Acetylserotonin O-methyltransferase (432 aa).

S-adenosyl-L-methionine contacts are provided by residues Tyr-146, Trp-163, Asp-209, 235–237 (GDF), and Arg-252. His-255 serves as the catalytic Proton donor/acceptor. Asp-256, Asn-302, and Gln-306 together coordinate substrate. The interval 373–432 (VPGARSDAAGTGSGTGNTGSGIMLQGETLESEVSAPQAGSDVGGAGNEPRSGTLKQGDWK) is disordered.

It belongs to the class I-like SAM-binding methyltransferase superfamily. Cation-independent O-methyltransferase family. Homodimer. In terms of tissue distribution, expressed predominantly in the pineal gland (at protein level). Very low expression, if any, in the retina.

The enzyme catalyses N-acetylserotonin + S-adenosyl-L-methionine = melatonin + S-adenosyl-L-homocysteine + H(+). It participates in aromatic compound metabolism; melatonin biosynthesis; melatonin from serotonin: step 1/2. In terms of biological role, catalyzes the transfer of a methyl group onto N-acetylserotonin, producing melatonin (N-acetyl-5-methoxytryptamine). The protein is Acetylserotonin O-methyltransferase (Asmt) of Rattus norvegicus (Rat).